Consider the following 228-residue polypeptide: Small ribosomal subunit protein uS2 (228 aa).

It belongs to the universal ribosomal protein uS2 family.

The polypeptide is Small ribosomal subunit protein uS2 (Buchnera aphidicola subsp. Baizongia pistaciae (strain Bp)).